We begin with the raw amino-acid sequence, 292 residues long: Inhibitory synaptic factor 1 (292 aa).

A disordered region spans residues 1 to 25; that stretch reads MNIRGAPDLGQPSDDPNSGGERERI. The stretch at 30 to 63 forms a coiled coil; it reads KMVIGQLEGILRELKEVAKELREVVSQIDKLTSD. The segment at 120-292 is disordered; it reads TPSDSVDGPE…ATKQKAKGKN (173 aa). Residues 180-192 show a composition bias toward basic and acidic residues; the sequence is GTRERVRFSDKVL. Residues 198–216 show a composition bias toward acidic residues; that stretch reads CDDEEGDGEEGEEEEEGDL. Residues 263–285 show a composition bias toward polar residues; sequence RNSSTQTVSDKSTQTVLPYTATK.

Belongs to the INSYN1 family. Interacts with GPHN.

Its subcellular location is the postsynaptic density. Its function is as follows. Component of the protein machinery at the inhibitory synapses, probably acting as a scaffold. Inhibitory synapses dampen neuronal activity through postsynaptic hyperpolarization. This synaptic inhibition is fundamental for the functioning of the central nervous system, shaping and orchestrating the flow of information through neuronal networks to generate a precise neural code. In Mus musculus (Mouse), this protein is Inhibitory synaptic factor 1 (Insyn1).